The chain runs to 1223 residues: Rho family-interacting cell polarization regulator 1 (1223 aa).

Residue Ser22 is modified to Phosphoserine. The stretch at 83 to 112 (RGLTAYLEVHQQEQEKLQRQIKESKRNSRL) forms a coiled coil. Phosphoserine is present on residues Ser345 and Ser347. At Thr351 the chain carries Phosphothreonine. The segment at 371-411 (NGTAWSLSSESSDDSSSPQLSGTARHSTPKPLVQQPEPLPV) is disordered. Composition is skewed to low complexity over residues 376–391 (SLSS…PQLS) and 399–411 (PKPL…PLPV). Residues Ser451, Ser454, and Ser468 each carry the phosphoserine modification. Composition is skewed to low complexity over residues 566–586 (TTIG…GSVP) and 595–655 (TPSP…TSPT). 2 disordered regions span residues 566–771 (TTIG…QHSE) and 856–887 (FLND…LDSS). The segment covering 656 to 665 (QEAKMSTHTT) has biased composition (polar residues). Over residues 673–688 (TTTSPISTTESPSPST) the composition is skewed to low complexity. Composition is skewed to polar residues over residues 693–703 (ISSSSAESTGP) and 725–741 (ASCT…SKPL). Phosphoserine is present on Ser748. Low complexity predominate over residues 748–767 (SPEQIPKSPSSSPSSSAPEP). Residues 858 to 867 (NDDEDEDNDG) show a composition bias toward acidic residues. Over residues 868–885 (PGDRHTSSPEVVAEDRLD) the composition is skewed to basic and acidic residues. 2 positions are modified to phosphoserine: Ser874 and Ser875.

This sequence belongs to the RIPOR family. In terms of assembly, interacts (via N-terminus) with RHOA (GTP-bound form); this interaction links active RHOA to STK24 and STK26 kinases. Interacts with RHOB. Interacts with RHOC. Interacts (via C-terminus) with PDCD10; this interaction occurs in a Rho-independent manner. Interacts (via C-terminus) with STK24; this interaction occurs in a PDCD10-dependent and Rho-independent manner. Interacts (via C-terminus) with STK26; this interaction occurs in a PDCD10-dependent and Rho-independent manner. Interacts (via N-terminus) with 14-3-3 proteins; these interactions occur in a Rho-dependent manner. In terms of tissue distribution, expressed in the kidney exclusively by glomerular podocytes.

The protein localises to the cytoplasm. Its subcellular location is the golgi apparatus. Functionally, downstream effector protein for Rho-type small GTPases that plays a role in cell polarity and directional migration. Acts as an adapter protein, linking active Rho proteins to STK24 and STK26 kinases, and hence positively regulates Golgi reorientation in polarized cell migration upon Rho activation. Involved in the subcellular relocation of STK26 from the Golgi to cytoplasm punctae in a Rho- and PDCD10-dependent manner upon serum stimulation. The sequence is that of Rho family-interacting cell polarization regulator 1 from Mus musculus (Mouse).